Consider the following 194-residue polypeptide: Imidazoleglycerol-phosphate dehydratase (194 aa).

This sequence belongs to the imidazoleglycerol-phosphate dehydratase family.

It is found in the cytoplasm. It carries out the reaction D-erythro-1-(imidazol-4-yl)glycerol 3-phosphate = 3-(imidazol-4-yl)-2-oxopropyl phosphate + H2O. It participates in amino-acid biosynthesis; L-histidine biosynthesis; L-histidine from 5-phospho-alpha-D-ribose 1-diphosphate: step 6/9. This is Imidazoleglycerol-phosphate dehydratase from Thermoanaerobacter pseudethanolicus (strain ATCC 33223 / 39E) (Clostridium thermohydrosulfuricum).